Reading from the N-terminus, the 340-residue chain is 4-hydroxy-2-oxovalerate aldolase (340 aa).

Residues 8–260 (VILHDMSLRD…SHGINLYDIM (253 aa)) form the Pyruvate carboxyltransferase domain. 16 to 17 (RD) lines the substrate pocket. Asp17 is a Mn(2+) binding site. The active-site Proton acceptor is the His20. Residues Ser170 and His199 each coordinate substrate. Positions 199 and 201 each coordinate Mn(2+). Tyr290 contacts substrate.

This sequence belongs to the 4-hydroxy-2-oxovalerate aldolase family.

It catalyses the reaction (S)-4-hydroxy-2-oxopentanoate = acetaldehyde + pyruvate. The polypeptide is 4-hydroxy-2-oxovalerate aldolase (Shewanella pealeana (strain ATCC 700345 / ANG-SQ1)).